The primary structure comprises 507 residues: Protein O-glucosyltransferase 3 (507 aa).

A signal peptide spans 1–20; sequence MRRLPRALLLQLRLALLVAA. The stretch at 24–134 is one Filamin repeat; sequence EVLVSAPRSL…VAQSPYILKG (111 aa). N-linked (GlcNAc...) asparagine glycans are attached at residues asparagine 61 and asparagine 306. The Prevents secretion from ER motif lies at 504 to 507; sequence REEL.

The protein belongs to the KDELC family.

It localises to the endoplasmic reticulum lumen. The catalysed reaction is L-seryl-[EGF-like domain protein] + UDP-alpha-D-glucose = 3-O-(beta-D-glucosyl)-L-seryl-[EGF-like domain protein] + UDP + H(+). The enzyme catalyses L-seryl-[EGF-like domain protein] + UDP-alpha-D-xylose = 3-O-(beta-D-xylosyl)-L-seryl-[EGF-like domain protein] + UDP + H(+). The protein operates within protein modification; protein glycosylation. Protein glucosyltransferase that catalyzes the transfer of glucose from UDP-glucose to a serine residue within the consensus sequence peptide C-X-N-T-X-G-S-F-X-C. Can also catalyze the transfer of xylose from UDP-xylose but less efficiently. Specifically targets extracellular EGF repeats of proteins such as NOTCH1, NOTCH3, FBN1, FBN2 and LTBP1. May regulate the transport of NOTCH1 and NOTCH3 to the plasma membrane and thereby the Notch signaling pathway. This Homo sapiens (Human) protein is Protein O-glucosyltransferase 3.